A 260-amino-acid chain; its full sequence is ATP synthase subunit a (260 aa).

5 consecutive transmembrane segments (helical) span residues 27-47, 90-110, 132-154, 208-228, and 230-250; these read FWTV…LFIW, IAPL…MDLI, SADV…YYSI, LIFI…LSVP, and AIFH…LTIV.

The protein belongs to the ATPase A chain family. In terms of assembly, F-type ATPases have 2 components, CF(1) - the catalytic core - and CF(0) - the membrane proton channel. CF(1) has five subunits: alpha(3), beta(3), gamma(1), delta(1), epsilon(1). CF(0) has three main subunits: a(1), b(2) and c(9-12). The alpha and beta chains form an alternating ring which encloses part of the gamma chain. CF(1) is attached to CF(0) by a central stalk formed by the gamma and epsilon chains, while a peripheral stalk is formed by the delta and b chains.

It is found in the cell inner membrane. Its function is as follows. Key component of the proton channel; it plays a direct role in the translocation of protons across the membrane. This chain is ATP synthase subunit a, found in Aeromonas hydrophila subsp. hydrophila (strain ATCC 7966 / DSM 30187 / BCRC 13018 / CCUG 14551 / JCM 1027 / KCTC 2358 / NCIMB 9240 / NCTC 8049).